The sequence spans 163 residues: C-type lectin lectoxin-Lio1 (163 aa).

The N-terminal stretch at 1-21 is a signal peptide; that stretch reads MERFIFAALLVVALSLSGTGA. Disulfide bonds link Cys25/Cys36, Cys53/Cys152, and Cys127/Cys144. A C-type lectin domain is found at 32 to 153; the sequence is SDGYCYKVFK…CRSKRYFICK (122 aa). Positions 117–119 match the Mannose-binding motif; the sequence is EPN. Ca(2+) is bound by residues Glu125 and Asp141.

Belongs to the true venom lectin family. Expressed by the venom gland.

Its subcellular location is the secreted. Its function is as follows. Mannose-binding lectin which recognizes specific carbohydrate structures and agglutinates a variety of animal cells by binding to cell-surface glycoproteins and glycolipids. May be a calcium-dependent lectin. This is C-type lectin lectoxin-Lio1 from Erythrolamprus poecilogyrus (Water snake).